A 340-amino-acid chain; its full sequence is Uroporphyrinogen decarboxylase (340 aa).

Substrate contacts are provided by residues 21–25, phenylalanine 40, aspartate 71, tyrosine 147, serine 202, and histidine 316; that span reads RQAGR.

Belongs to the uroporphyrinogen decarboxylase family. As to quaternary structure, homodimer.

The protein localises to the cytoplasm. It carries out the reaction uroporphyrinogen III + 4 H(+) = coproporphyrinogen III + 4 CO2. The protein operates within porphyrin-containing compound metabolism; protoporphyrin-IX biosynthesis; coproporphyrinogen-III from 5-aminolevulinate: step 4/4. Catalyzes the decarboxylation of four acetate groups of uroporphyrinogen-III to yield coproporphyrinogen-III. This chain is Uroporphyrinogen decarboxylase, found in Wolinella succinogenes (strain ATCC 29543 / DSM 1740 / CCUG 13145 / JCM 31913 / LMG 7466 / NCTC 11488 / FDC 602W) (Vibrio succinogenes).